Consider the following 156-residue polypeptide: Persephin (156 aa).

An N-terminal signal peptide occupies residues 1 to 21 (MAVGKFLLGSLLLLSLQLGQG). Intrachain disulfides connect Cys66–Cys124, Cys93–Cys152, and Cys97–Cys154.

This sequence belongs to the TGF-beta family. GDNF subfamily. As to quaternary structure, homodimer; disulfide-linked. Interacts with GFRA4 coreceptor and RET: forms a 2:2:2 ternary complex composed of PSPN ligand, GFRA4 and RET receptor.

Its subcellular location is the secreted. In terms of biological role, growth factor that exhibits neurotrophic activity on mesencephalic dopaminergic and motor neurons. Acts by binding to its coreceptor, GFRA4, leading to autophosphorylation and activation of the RET receptor. This Homo sapiens (Human) protein is Persephin.